We begin with the raw amino-acid sequence, 550 residues long: ATP synthase subunit alpha (550 aa).

172 to 179 (GDRKTGKT) is an ATP binding site. A disordered region spans residues 521–550 (EPAAEPLAGEEDRETVTRFHDDATDRPAGS). Basic and acidic residues predominate over residues 534–550 (ETVTRFHDDATDRPAGS).

It belongs to the ATPase alpha/beta chains family. F-type ATPases have 2 components, CF(1) - the catalytic core - and CF(0) - the membrane proton channel. CF(1) has five subunits: alpha(3), beta(3), gamma(1), delta(1), epsilon(1). CF(0) has three main subunits: a(1), b(2) and c(9-12). The alpha and beta chains form an alternating ring which encloses part of the gamma chain. CF(1) is attached to CF(0) by a central stalk formed by the gamma and epsilon chains, while a peripheral stalk is formed by the delta and b chains.

It localises to the cell membrane. The catalysed reaction is ATP + H2O + 4 H(+)(in) = ADP + phosphate + 5 H(+)(out). Functionally, produces ATP from ADP in the presence of a proton gradient across the membrane. The alpha chain is a regulatory subunit. This Salinispora tropica (strain ATCC BAA-916 / DSM 44818 / JCM 13857 / NBRC 105044 / CNB-440) protein is ATP synthase subunit alpha.